The primary structure comprises 145 residues: Aegerolysin Aa-Pri1 (145 aa).

A propeptide spanning residues 1 to 8 is cleaved from the precursor; that stretch reads MDSNKDER.

Belongs to the aegerolysin family.

The chain is Aegerolysin Aa-Pri1 (AA-PRI1) from Cyclocybe aegerita (Black poplar mushroom).